The primary structure comprises 227 residues: Cytochrome c oxidase subunit 2 (227 aa).

Over 1–14 (MAYPFQLGLQDATS) the chain is Mitochondrial intermembrane. A helical membrane pass occupies residues 15 to 45 (PIMEELMNFHDHTLMIVFLISSLVLYIISLM). Over 46 to 59 (LTTKLTHTSTMDAQ) the chain is Mitochondrial matrix. The chain crosses the membrane as a helical span at residues 60 to 87 (EVETIWTILPAVILILIALPSLRILYMM). Residues 88–227 (DEINNPVLTV…NFENWSASMI (140 aa)) lie on the Mitochondrial intermembrane side of the membrane. Residues His161, Cys196, Glu198, Cys200, His204, and Met207 each coordinate Cu cation. Residue Glu198 participates in Mg(2+) binding.

Belongs to the cytochrome c oxidase subunit 2 family. In terms of assembly, component of the cytochrome c oxidase (complex IV, CIV), a multisubunit enzyme composed of 14 subunits. The complex is composed of a catalytic core of 3 subunits MT-CO1, MT-CO2 and MT-CO3, encoded in the mitochondrial DNA, and 11 supernumerary subunits COX4I, COX5A, COX5B, COX6A, COX6B, COX6C, COX7A, COX7B, COX7C, COX8 and NDUFA4, which are encoded in the nuclear genome. The complex exists as a monomer or a dimer and forms supercomplexes (SCs) in the inner mitochondrial membrane with NADH-ubiquinone oxidoreductase (complex I, CI) and ubiquinol-cytochrome c oxidoreductase (cytochrome b-c1 complex, complex III, CIII), resulting in different assemblies (supercomplex SCI(1)III(2)IV(1) and megacomplex MCI(2)III(2)IV(2)). Found in a complex with TMEM177, COA6, COX18, COX20, SCO1 and SCO2. Interacts with TMEM177 in a COX20-dependent manner. Interacts with COX20. Interacts with COX16. Cu cation is required as a cofactor.

Its subcellular location is the mitochondrion inner membrane. The catalysed reaction is 4 Fe(II)-[cytochrome c] + O2 + 8 H(+)(in) = 4 Fe(III)-[cytochrome c] + 2 H2O + 4 H(+)(out). Its function is as follows. Component of the cytochrome c oxidase, the last enzyme in the mitochondrial electron transport chain which drives oxidative phosphorylation. The respiratory chain contains 3 multisubunit complexes succinate dehydrogenase (complex II, CII), ubiquinol-cytochrome c oxidoreductase (cytochrome b-c1 complex, complex III, CIII) and cytochrome c oxidase (complex IV, CIV), that cooperate to transfer electrons derived from NADH and succinate to molecular oxygen, creating an electrochemical gradient over the inner membrane that drives transmembrane transport and the ATP synthase. Cytochrome c oxidase is the component of the respiratory chain that catalyzes the reduction of oxygen to water. Electrons originating from reduced cytochrome c in the intermembrane space (IMS) are transferred via the dinuclear copper A center (CU(A)) of subunit 2 and heme A of subunit 1 to the active site in subunit 1, a binuclear center (BNC) formed by heme A3 and copper B (CU(B)). The BNC reduces molecular oxygen to 2 water molecules using 4 electrons from cytochrome c in the IMS and 4 protons from the mitochondrial matrix. The sequence is that of Cytochrome c oxidase subunit 2 (MT-CO2) from Maxomys bartelsii (Bartels's Javan maxomys).